Reading from the N-terminus, the 416-residue chain is UDP-N-acetylglucosamine 1-carboxyvinyltransferase (416 aa).

22–23 (KN) is a phosphoenolpyruvate binding site. Position 92 (Arg92) interacts with UDP-N-acetyl-alpha-D-glucosamine. The active-site Proton donor is the Cys116. Cys116 is modified (2-(S-cysteinyl)pyruvic acid O-phosphothioketal). Residues 121–125 (RPIDQ), Asp304, and Ile326 each bind UDP-N-acetyl-alpha-D-glucosamine.

The protein belongs to the EPSP synthase family. MurA subfamily.

The protein resides in the cytoplasm. The enzyme catalyses phosphoenolpyruvate + UDP-N-acetyl-alpha-D-glucosamine = UDP-N-acetyl-3-O-(1-carboxyvinyl)-alpha-D-glucosamine + phosphate. It participates in cell wall biogenesis; peptidoglycan biosynthesis. Its function is as follows. Cell wall formation. Adds enolpyruvyl to UDP-N-acetylglucosamine. The protein is UDP-N-acetylglucosamine 1-carboxyvinyltransferase of Desulfatibacillum aliphaticivorans.